A 225-amino-acid chain; its full sequence is Uracil-DNA glycosylase 1 (225 aa).

The active-site Proton acceptor is the Asp68.

Belongs to the uracil-DNA glycosylase (UDG) superfamily. UNG family.

The protein resides in the cytoplasm. It carries out the reaction Hydrolyzes single-stranded DNA or mismatched double-stranded DNA and polynucleotides, releasing free uracil.. Excises uracil residues from the DNA which can arise as a result of misincorporation of dUMP residues by DNA polymerase or due to deamination of cytosine. This chain is Uracil-DNA glycosylase 1 (ung1), found in Streptomyces avermitilis (strain ATCC 31267 / DSM 46492 / JCM 5070 / NBRC 14893 / NCIMB 12804 / NRRL 8165 / MA-4680).